Consider the following 601-residue polypeptide: 1-deoxy-D-xylulose-5-phosphate synthase (601 aa).

Thiamine diphosphate contacts are provided by residues histidine 63 and 104–106 (GHS). Aspartate 135 provides a ligand contact to Mg(2+). Thiamine diphosphate is bound by residues 136–137 (GS), asparagine 164, tyrosine 272, and glutamate 353. Asparagine 164 contacts Mg(2+).

It belongs to the transketolase family. DXPS subfamily. In terms of assembly, homodimer. It depends on Mg(2+) as a cofactor. Requires thiamine diphosphate as cofactor.

It catalyses the reaction D-glyceraldehyde 3-phosphate + pyruvate + H(+) = 1-deoxy-D-xylulose 5-phosphate + CO2. It functions in the pathway metabolic intermediate biosynthesis; 1-deoxy-D-xylulose 5-phosphate biosynthesis; 1-deoxy-D-xylulose 5-phosphate from D-glyceraldehyde 3-phosphate and pyruvate: step 1/1. Catalyzes the acyloin condensation reaction between C atoms 2 and 3 of pyruvate and glyceraldehyde 3-phosphate to yield 1-deoxy-D-xylulose-5-phosphate (DXP). The sequence is that of 1-deoxy-D-xylulose-5-phosphate synthase from Aliarcobacter butzleri (strain RM4018) (Arcobacter butzleri).